We begin with the raw amino-acid sequence, 956 residues long: F-box only protein 10 (956 aa).

Residues 1–48 form the F-box domain; it reads MEAGGLPLELWRMILAYLHLPDLGRCSLVCRAWYELILSLDSTRWRQL. PbH1 repeat units follow at residues 198–217 and 238–260; these read SGHV…QVHG and VPLC…TVEG. Residues 314-367 are disordered; it reads EGSQSPTSPASSSPKPGSKAGSQEAEVGSDGERVAQTPDSSDGGLSPSGEDEDE. Composition is skewed to low complexity over residues 316–336 and 351–361; these read SQSP…AGSQ and PDSSDGGLSPS. Phosphoserine is present on residues Ser-321 and Ser-326. PbH1 repeat units lie at residues 427-448, 449-470, 471-493, 494-516, 538-560, 561-583, 584-606, 607-629, 630-652, 653-675, 717-739, 740-762, 764-786, 787-809, and 832-854; these read VQGC…FVCS, HGRA…RCIH, NSKI…FLRL, EGGG…DIRK, LGNG…GIYI, LYHG…GIAV, NENG…GVDI, RRGG…GVVV, GDEG…GVWM, MSSS…GVAV, RPIT…GLYV, QSSE…GITV, QSSQ…GVKV, EAQC…GIIT, and LPRS…GIAV.

In terms of assembly, component of the SCF(FBXO10) complex consisting of CUL1, SKP1 and FBXO10. Interacts with BCL2. Interacts with PRDM1.

The protein resides in the cytoplasm. It participates in protein modification; protein ubiquitination. Substrate-recognition component of the SCF (SKP1-CUL1-F-box protein)-type E3 ubiquitin ligase complex. Mediates the ubiquitination and degradation of BCL2, an antiapoptotic protein, thereby playing a role in apoptosis by controlling the stability of BCL2. Targets also the receptor for advanced glycation end products RAGE for ubiquitination and subsequent lysosomal degradation. Directly controls HGAL/GCSAM ubiquitination and degradation and thereby decreases BCR signaling. This Homo sapiens (Human) protein is F-box only protein 10 (FBXO10).